The primary structure comprises 182 residues: Adenine phosphoribosyltransferase (182 aa).

Belongs to the purine/pyrimidine phosphoribosyltransferase family. Homodimer.

It localises to the cytoplasm. The catalysed reaction is AMP + diphosphate = 5-phospho-alpha-D-ribose 1-diphosphate + adenine. It participates in purine metabolism; AMP biosynthesis via salvage pathway; AMP from adenine: step 1/1. Functionally, catalyzes a salvage reaction resulting in the formation of AMP, that is energically less costly than de novo synthesis. In Pseudomonas syringae pv. tomato (strain ATCC BAA-871 / DC3000), this protein is Adenine phosphoribosyltransferase.